The chain runs to 378 residues: Putative gustatory receptor 22f (378 aa).

At 1–13 the chain is on the cytoplasmic side; it reads MKMFQPRRGFSCH. The helical transmembrane segment at 14–34 threads the bilayer; it reads LAWFMLQTTLYASWLLGLFPF. The Extracellular portion of the chain corresponds to 35-48; sequence TFDSRRKQLKRSRW. The chain crosses the membrane as a helical span at residues 49-69; it reads LLLYGFVLHSLAMCLAMSSHL. The Cytoplasmic segment spans residues 70-88; the sequence is ASKQRRKYNAFERNPLLEK. A helical membrane pass occupies residues 89–109; the sequence is IYMQFQVTTFFTISVLLLMNV. At 110 to 143 the chain is on the extracellular side; sequence WKSNTVRKIANELLTLEGQVKDLLTLKNCPNFNC. The helical transmembrane segment at 144–164 threads the bilayer; it reads FVIKKHVAAIGQFVISIYFCL. Residues 165–178 are Cytoplasmic-facing; the sequence is CQENSYPKILKILC. Residues 179–199 form a helical membrane-spanning segment; the sequence is CLPSVGLQLIIMHFHTEIILV. Residues 200-245 lie on the Extracellular side of the membrane; the sequence is YRYVWLVNETLEDSHHLSSSRIHALASLYDRLLKLSELVVACNDLQ. An N-linked (GlcNAc...) asparagine glycan is attached at asparagine 207. A helical membrane pass occupies residues 246-266; it reads LILMLIIYLIGNTVQIFFLIV. At 267–354 the chain is on the cytoplasmic side; it reads LGVSMNKRYI…LCGLFSINHN (88 aa). The chain crosses the membrane as a helical span at residues 355-375; sequence MGFQMIITSFLYLVYLLQFDF. Over 376-378 the chain is Extracellular; it reads MNL.

Belongs to the insect chemoreceptor superfamily. Gustatory receptor (GR) family. Gr22e subfamily. As to expression, taste bristles in the foreleg and labial palps.

The protein resides in the cell membrane. Its function is as follows. Probable gustatory receptor which mediates acceptance or avoidance behavior, depending on its substrates. This is Putative gustatory receptor 22f (Gr22f) from Drosophila melanogaster (Fruit fly).